Consider the following 95-residue polypeptide: MEEWFLYLIRCPDNRLYTGITTDVARRFAQHQRGKGAKALRGKGELTLVFSAPAGSRSEALRAEYRIKQLTKRQKEQLVAGELAFEAMKSAPQTP.

The GIY-YIG domain maps to 2 to 77; that stretch reads EEWFLYLIRC…KQLTKRQKEQ (76 aa).

It belongs to the UPF0213 family.

In Cronobacter sakazakii (strain ATCC BAA-894) (Enterobacter sakazakii), this protein is UPF0213 protein ESA_03545.